The sequence spans 281 residues: Putative phosphatase/phosphodiesterase MPN_349 (281 aa).

Residues D12, E43, N44, and N71 each contribute to the Fe cation site. H72 functions as the Proton donor in the catalytic mechanism. Residues H158, H183, and H185 each coordinate Fe cation.

This sequence belongs to the YmdB-like family. Fe(3+) is required as a cofactor.

The protein is Putative phosphatase/phosphodiesterase MPN_349 of Mycoplasma pneumoniae (strain ATCC 29342 / M129 / Subtype 1) (Mycoplasmoides pneumoniae).